The following is an 833-amino-acid chain: MEEKTQIKTFLGSKLPKYGMKSVRSTLQPMPNGATVTLLGTSKSSNVKSYIKNNGSDCSLSHSFNWRKTNKYQLGSQNTAELNNIQSTHDKLIEPEQHAPAPGTLDGHGIKGGLKSASLFTSKLARPSTMFVSSAEELSQKSFSGPSNLGKFTKGTLLGRTSYSSVNAKSHLNAFYGNRSSGNVQKPRVNSCASRSSSGESLAQSPDNAKSITCEKMVRSQSFSHSIQNVFLPPSSITRSHSFNRAVDLTKPYQNQQLPVRVPLRSGMLTRSSLQSEVLNGNEHVGFGFNRPYAAAGKKLALSNGPAVSSTLVYRMAHPPLLKSSRPPFSGPMTVDSNKNPPADMCVEEEGMVSAQDSSPGKDQELIENESYRRDNDQTGKNESKVRYLSDDVDDISLSSLSSSDKNDLSEDFSDDFIDLEDSNRTRITPEEMTLKEEKHESRPSKDIFDSPKESEQAFSKAEEWIDISVSDRSECTKHTSGNNLISPDTDYRAGSSFELSPSDSSDGTYMWDEEGLEPIGSVHPVGSYESSEMNSIDILNNLESCDLEDDDLMLDVDLPEDAPLENVECDNMNRFDRTDRNVRQSQDGFWKRPPQRWSGQDHYHLSHPGHYHHHGQSDLSRGSPYRESPLGHFESYGGTPFFQAQKMFVDVPDNTVILDEMTLRHMVQDCTAVKTQLLKLKRLLHQHDGSGSLHDVQLSLPSSPEPEDGDQIYKNEDLLNEITQLKEEIKKKDEKIQLLEQQLATRCNCQQKSKEEKCTYADKYTQTPWRRIPGGYCAPSFSPWQGSFQGMPRTVPPHRRQTSSTTAFQQPSQIYRPRPGKTNKATTYRGPQ.

The segment at 178–208 (NRSSGNVQKPRVNSCASRSSSGESLAQSPDN) is disordered. Over residues 191 to 208 (SCASRSSSGESLAQSPDN) the composition is skewed to polar residues. S222 carries the post-translational modification Phosphoserine. 4 disordered regions span residues 321–345 (LLKS…PADM), 424–452 (NRTR…FDSP), 478–508 (KHTS…SSDG), and 602–631 (DHYH…ESPL). S451 carries the phosphoserine modification. The span at 496–506 (SSFELSPSDSS) shows a compositional bias: low complexity. Residues 606–615 (LSHPGHYHHH) are compositionally biased toward basic residues. Positions 711-747 (DQIYKNEDLLNEITQLKEEIKKKDEKIQLLEQQLATR) form a coiled coil. Residues 789–833 (FQGMPRTVPPHRRQTSSTTAFQQPSQIYRPRPGKTNKATTYRGPQ) are disordered. Positions 803–814 (TSSTTAFQQPSQ) are enriched in polar residues.

It belongs to the CCSER family. In terms of tissue distribution, expressed in brain (at protein level).

The protein resides in the cytoplasm. It localises to the cytoskeleton. In terms of biological role, microtubule-binding protein which might play a role in microtubule bundling. This chain is Serine-rich coiled-coil domain-containing protein 2 (Ccser2), found in Mus musculus (Mouse).